The chain runs to 254 residues: Thiamine thiazole synthase (254 aa).

NAD(+) contacts are provided by residues Ser36, 55–56, Gly63, Val127, and 154–156; these read EK and HVD. Fe cation is bound by residues Asp156 and His171. Met219 is a binding site for NAD(+). Glycine is bound at residue Arg229.

The protein belongs to the THI4 family. Homooctamer; tetramer of dimers. Fe(2+) is required as a cofactor.

It carries out the reaction hydrogen sulfide + glycine + NAD(+) = ADP-5-ethyl-4-methylthiazole-2-carboxylate + nicotinamide + 3 H2O + H(+). It functions in the pathway cofactor biosynthesis; thiamine diphosphate biosynthesis. Its function is as follows. Involved in the biosynthesis of the thiazole moiety of thiamine. Catalyzes the conversion of NAD and glycine to adenosine diphosphate 5-(2-hydroxyethyl)-4-methylthiazole-2-carboxylate (ADT), an adenylated thiazole intermediate, using free sulfide as a source of sulfur. This chain is Thiamine thiazole synthase, found in Methanoculleus marisnigri (strain ATCC 35101 / DSM 1498 / JR1).